Here is a 353-residue protein sequence, read N- to C-terminus: 2,4-diaminopentanoate dehydrogenase (353 aa).

It belongs to the DapB family. In terms of assembly, homodimer.

The catalysed reaction is (2R,4S)-2,4-diaminopentanoate + NAD(+) + H2O = (2R)-2-amino-4-oxopentanoate + NH4(+) + NADH + H(+). It catalyses the reaction (2R,4S)-2,4-diaminopentanoate + NADP(+) + H2O = (2R)-2-amino-4-oxopentanoate + NH4(+) + NADPH + H(+). Inhibited by p-chloromercuribenzoate, iodoacetate and N-ethylmaleimide. Involved in the ornithine fermentation pathway. Catalyzes the oxidative deamination of (2R,4S)-2,4-diaminopentanoate (DAP) to yield 2-amino-4-ketopentanoate (AKP). This Acetoanaerobium sticklandii (strain ATCC 12662 / DSM 519 / JCM 1433 / CCUG 9281 / NCIMB 10654 / HF) (Clostridium sticklandii) protein is 2,4-diaminopentanoate dehydrogenase.